A 349-amino-acid polypeptide reads, in one-letter code: Protein RecA (349 aa).

65–72 (GPESSGKT) is an ATP binding site. Residues 329–349 (FDGDVDENENEDDSPKTLFDE) are disordered. Positions 331–340 (GDVDENENED) are enriched in acidic residues.

This sequence belongs to the RecA family.

Its subcellular location is the cytoplasm. Can catalyze the hydrolysis of ATP in the presence of single-stranded DNA, the ATP-dependent uptake of single-stranded DNA by duplex DNA, and the ATP-dependent hybridization of homologous single-stranded DNAs. It interacts with LexA causing its activation and leading to its autocatalytic cleavage. The chain is Protein RecA from Staphylococcus epidermidis (strain ATCC 35984 / DSM 28319 / BCRC 17069 / CCUG 31568 / BM 3577 / RP62A).